The sequence spans 154 residues: Fucose mutarotase (154 aa).

The active-site Proton donor is His24. Asp32 is a binding site for substrate. Asp69 is an active-site residue. Residues Met79, Tyr120, Tyr138, and Asn140 each coordinate substrate. Tyr120 is a catalytic residue.

This sequence belongs to the RbsD / FucU family. Mainly homodimer, but also exists as homotetramer, homooctamer, and homodecamer. The homodimeric form seems catalytically inactive.

The enzyme catalyses alpha-L-fucose = beta-L-fucose. Its pathway is carbohydrate metabolism; L-fucose metabolism. In terms of biological role, involved in the interconversion between alpha- and beta-L-fucoses. L-Fucose (6-deoxy-L-galactose) exists as alpha-L-fucose (29.5%) and beta-L-fucose (70.5%), the beta-form is metabolized through the salvage pathway. GDP-L-fucose formed either by the de novo or salvage pathways is transported into the endoplasmic reticulum, where it serves as a substrate for N- and O-glycosylations by fucosyltransferases. Fucosylated structures expressed on cell surfaces or secreted in biological fluids are believed to play a critical role in cell-cell adhesion and recognition processes. The protein is Fucose mutarotase (FUOM) of Homo sapiens (Human).